We begin with the raw amino-acid sequence, 210 residues long: Dof zinc finger protein DOF4.4 (210 aa).

A Dof-type zinc finger spans residues 24-78 (RVCPRCDSDNTKFCFYNNYSESQPRYFCKNCRRYWTHGGALRNIPVGGSCRKPKR). 4 residues coordinate Zn(2+): C26, C29, C51, and C54.

It is found in the nucleus. Functionally, transcription factor that binds specifically to a 5'-AA[AG]G-3' consensus core sequence. This is Dof zinc finger protein DOF4.4 (DOF4.4) from Arabidopsis thaliana (Mouse-ear cress).